The primary structure comprises 855 residues: Oxysterol-binding protein-related protein 3 (855 aa).

The disordered stretch occupies residues 1 to 32; it reads MSDEKNLGVSQKLVSPSRSTSSCSSKQGSRQD. A phosphoserine mark is found at serine 15 and serine 33. Residues 15–31 are compositionally biased toward low complexity; that stretch reads SPSRSTSSCSSKQGSRQ. Residues 50–145 enclose the PH domain; that stretch reads PPVQKGFLLK…WVSKLRHHRM (96 aa). The FFAT 1 motif lies at 161 to 167; sequence FFSGSSV. Serine 199, serine 250, serine 272, serine 277, serine 288, serine 291, serine 340, serine 393, serine 405, and serine 408 each carry phosphoserine. Positions 274 to 293 are disordered; sequence PNLSTLDFGEEKSYSDGSEA. The disordered stretch occupies residues 377 to 396; sequence DPPAVPKPGDNLAEENSRDE. The short motif at 450–454 is the FFAT 2 element; sequence LSLDN. A disordered region spans residues 468–490; sequence PVLESSGEARSKRRTSLPAPGPN.

The protein belongs to the OSBP family. In terms of assembly, homodimer. Interacts with RRAS. Interacts (phosphorylated form) with VAPA. Interacts with OSBPL6. Phosphorylation is enhanced in vitro by phorbol-12-myristate-13-acetate (PMA), forskolin and calcium ionophore A23187. Phosphorylation seems to be stimulated in conditions of low cell-cell (or cell-matrix) adhesion. In terms of tissue distribution, expressed in spinal ganglia. Expressed in a subset of small lymphocytes (at protein level).

It is found in the endoplasmic reticulum membrane. Its subcellular location is the cytoplasm. The protein resides in the cytosol. The protein localises to the cell membrane. It localises to the cell projection. It is found in the filopodium tip. Its subcellular location is the nucleus membrane. In terms of biological role, phosphoinositide-binding protein which associates with both cell and endoplasmic reticulum (ER) membranes. Can bind to the ER membrane protein VAPA and recruit VAPA to plasma membrane sites, thus linking these intracellular compartments. The ORP3-VAPA complex stimulates RRAS signaling which in turn attenuates integrin beta-1 (ITGB1) activation at the cell surface. With VAPA, may regulate ER morphology. Has a role in regulation of the actin cytoskeleton, cell polarity and cell adhesion. Binds to phosphoinositides with preference for PI(3,4)P2 and PI(3,4,5)P3. Also binds 25-hydroxycholesterol and cholesterol. The sequence is that of Oxysterol-binding protein-related protein 3 (Osbpl3) from Mus musculus (Mouse).